Consider the following 447-residue polypeptide: Glutamate--tRNA ligase 2 (447 aa).

Positions 9–19 match the 'HIGH' region motif; sequence PSPTGYLHIGN. Positions 240–244 match the 'KMSKS' region motif; sequence GLSKR. ATP is bound at residue Lys-243.

The protein belongs to the class-I aminoacyl-tRNA synthetase family. Glutamate--tRNA ligase type 1 subfamily. Monomer.

It localises to the cytoplasm. It catalyses the reaction tRNA(Glu) + L-glutamate + ATP = L-glutamyl-tRNA(Glu) + AMP + diphosphate. Catalyzes the attachment of glutamate to tRNA(Glu) in a two-step reaction: glutamate is first activated by ATP to form Glu-AMP and then transferred to the acceptor end of tRNA(Glu). In Methylobacterium sp. (strain 4-46), this protein is Glutamate--tRNA ligase 2.